A 158-amino-acid polypeptide reads, in one-letter code: NADH-quinone oxidoreductase subunit B (158 aa).

Positions 37, 38, 102, and 132 each coordinate [4Fe-4S] cluster.

It belongs to the complex I 20 kDa subunit family. In terms of assembly, NDH-1 is composed of 14 different subunits. Subunits NuoB, C, D, E, F, and G constitute the peripheral sector of the complex. It depends on [4Fe-4S] cluster as a cofactor.

It localises to the cell inner membrane. It catalyses the reaction a quinone + NADH + 5 H(+)(in) = a quinol + NAD(+) + 4 H(+)(out). NDH-1 shuttles electrons from NADH, via FMN and iron-sulfur (Fe-S) centers, to quinones in the respiratory chain. Couples the redox reaction to proton translocation (for every two electrons transferred, four hydrogen ions are translocated across the cytoplasmic membrane), and thus conserves the redox energy in a proton gradient. The protein is NADH-quinone oxidoreductase subunit B of Nitrosomonas europaea (strain ATCC 19718 / CIP 103999 / KCTC 2705 / NBRC 14298).